Consider the following 115-residue polypeptide: Ig kappa chain V region 3315 (115 aa).

Residues alanine 1–cysteine 24 are framework-1. The segment at glutamine 25–serine 37 is complementarity-determining-1. The interval tryptophan 38–tyrosine 52 is framework-2. Residues arginine 53–serine 59 form a complementarity-determining-2 region. Positions glycine 60–cysteine 91 are framework-3. Positions leucine 92–threonine 104 are complementarity-determining-3. Residues phenylalanine 105–lysine 114 form a framework-4 region.

The protein is Ig kappa chain V region 3315 of Oryctolagus cuniculus (Rabbit).